A 527-amino-acid chain; its full sequence is Nucleobase-ascorbate transporter LPE1 (527 aa).

The next 12 helical transmembrane spans lie at 43-63 (LVML…MGGG), 68-88 (AIVI…QVHF), 92-112 (LPAV…IILS), 132-152 (LQGA…FGIW), 163-183 (AAVP…FPGV), 189-209 (VGLP…HLFA), 219-239 (AVLV…AAGA), 284-304 (FAML…LIAV), 361-383 (VIKI…AVLA), 387-409 (LPIF…FSLL), 427-447 (LFLG…FGFG), and 458-478 (VMVN…AYLL).

The protein belongs to the nucleobase:cation symporter-2 (NCS2) (TC 2.A.40) family. In terms of tissue distribution, highly expressed in roots.

The protein resides in the membrane. Inhibited by excess of xanthin, uric acid and ascorbic acid, and by 100 um N,N-dicyclohexylcarbodiimide and 30 um carbonyl cyanide m-chlorophenyl-hydrazone. High affinity uric acid-xanthine transporter in A.nidulans. Binds, but cannot transport ascorbic acid. The polypeptide is Nucleobase-ascorbate transporter LPE1 (LPE1) (Zea mays (Maize)).